We begin with the raw amino-acid sequence, 76 residues long: Small ribosomal subunit protein bS18 (76 aa).

This sequence belongs to the bacterial ribosomal protein bS18 family. In terms of assembly, part of the 30S ribosomal subunit. Forms a tight heterodimer with protein bS6.

In terms of biological role, binds as a heterodimer with protein bS6 to the central domain of the 16S rRNA, where it helps stabilize the platform of the 30S subunit. The protein is Small ribosomal subunit protein bS18 of Pseudomonas aeruginosa (strain LESB58).